Here is a 269-residue protein sequence, read N- to C-terminus: Ribonuclease HII (269 aa).

In terms of domain architecture, RNase H type-2 spans Arg-28–Arg-222. The a divalent metal cation site is built by Asp-34, Glu-35, and Asp-128.

This sequence belongs to the RNase HII family. Requires Mn(2+) as cofactor. Mg(2+) is required as a cofactor.

It is found in the cytoplasm. The enzyme catalyses Endonucleolytic cleavage to 5'-phosphomonoester.. In terms of biological role, endonuclease that specifically degrades the RNA of RNA-DNA hybrids. The protein is Ribonuclease HII of Salinispora arenicola (strain CNS-205).